The following is a 188-amino-acid chain: MVEIFNYSTSVYEKHSSTNKLVNDFRKEIQMEGAAIRDIAKHAQILDMTPKPSALSTLMQTNKKTCWASFSPPTNFHKQRFSTPYLVPSLGSPDKQDQDMEKISSYLKVLTRGKFSYRSTADTLSRKNKRSSDQKRNGQHFEQEELEVEEEVLVREGTVLLRALDQGIKSSNLLIDYVISRIFQFVQG.

The disordered stretch occupies residues Ala-121 to Glu-142. The segment covering Arg-130–Glu-142 has biased composition (basic and acidic residues).

The protein belongs to the chlamydial CPn_0422/CT_273/TC_0545 family.

This is an uncharacterized protein from Chlamydia trachomatis serovar D (strain ATCC VR-885 / DSM 19411 / UW-3/Cx).